We begin with the raw amino-acid sequence, 472 residues long: Glycogen synthase (472 aa).

K16 is a binding site for ADP-alpha-D-glucose.

The protein belongs to the glycosyltransferase 1 family. Bacterial/plant glycogen synthase subfamily.

It carries out the reaction [(1-&gt;4)-alpha-D-glucosyl](n) + ADP-alpha-D-glucose = [(1-&gt;4)-alpha-D-glucosyl](n+1) + ADP + H(+). The protein operates within glycan biosynthesis; glycogen biosynthesis. Functionally, synthesizes alpha-1,4-glucan chains using ADP-glucose. The polypeptide is Glycogen synthase (Jannaschia sp. (strain CCS1)).